We begin with the raw amino-acid sequence, 141 residues long: Hemoglobin subunit alpha (141 aa).

The 141-residue stretch at 1–141 (VLSPADKTNV…VSTVLTSKYR (141 aa)) folds into the Globin domain. Serine 3 is modified (phosphoserine). Lysine 7 is modified (N6-succinyllysine). A Phosphothreonine modification is found at threonine 8. An N6-succinyllysine modification is found at lysine 11. Position 16 is an N6-acetyllysine; alternate (lysine 16). Lysine 16 is subject to N6-succinyllysine; alternate. Phosphotyrosine is present on tyrosine 24. The residue at position 35 (serine 35) is a Phosphoserine. Lysine 40 bears the N6-succinyllysine mark. Position 49 is a phosphoserine (serine 49). Histidine 58 lines the O2 pocket. Histidine 87 contacts heme b. Serine 102 carries the post-translational modification Phosphoserine. At threonine 108 the chain carries Phosphothreonine. Serine 124 carries the phosphoserine modification. Phosphothreonine is present on residues threonine 134 and threonine 137. Serine 138 carries the phosphoserine modification.

This sequence belongs to the globin family. Heterotetramer of two alpha chains and two beta chains. In terms of tissue distribution, red blood cells.

In terms of biological role, involved in oxygen transport from the lung to the various peripheral tissues. The polypeptide is Hemoglobin subunit alpha (Tamias merriami (Merriam's chipmunk)).